Here is a 188-residue protein sequence, read N- to C-terminus: MANNTTSLGSPWPENFWEDLIMSFTVSVAIGLAIGGFLWALFVFLSRRRRASAPISQWSPTRRPRSSYNHGLNRTGFYRHSGYERRSNLSLASLTFQRQASMELVNSFPRKSSFRASTFHPFLQCPPLPVETESQLMTLSASTTPSTLSTAHSPSRPDFRWSSNSLRMGLSTPPPPAYESIIKAFPDS.

Residues 24 to 44 (FTVSVAIGLAIGGFLWALFVF) traverse the membrane as a helical segment. Positions 47–65 (RRRRASAPISQWSPTRRPR) match the Bipartite nuclear localization signal motif. Residues serine 87, serine 90, serine 93, and serine 101 each carry the phosphoserine modification.

Belongs to the MYCT1 family. Highly expressed in lung, heart, and skeletal muscle. Expressed in brain, eye, liver, kidney, smooth muscle, pancreas, thyroid, thymus, submaxillary gland, spleen, testis, ovary, prostate, epididymis, and uterus. Deregulated expression promotes apoptosis in response to growth factor deprivation. Overexpression in synergy with CCNB1 may promote genomic instability.

It localises to the nucleus membrane. In terms of biological role, may regulate certain MYC target genes, MYC seems to be a direct upstream transcriptional activator. Does not seem to significantly affect growth cell capacity. Overexpression seems to mediate many of the known phenotypic features associated with MYC, including promotion of apoptosis, alteration of morphology, enhancement of anchorage-independent growth, tumorigenic conversion, promotion of genomic instability and inhibition of hematopoietic differentiation. The polypeptide is Myc target protein 1 (Myct1) (Mus musculus (Mouse)).